Consider the following 169-residue polypeptide: uncharacterized protein (169 aa).

An N-terminal signal peptide occupies residues 1–21 (MVPVARASLFTLACLLVSVCA).

In terms of tissue distribution, component of the acid-soluble and acid-insoluble organic matrix of calcified shell layers (at protein level).

Its subcellular location is the secreted. This is an uncharacterized protein from Haliotis asinina (Donkey's ear abalone).